The primary structure comprises 724 residues: N-alpha-acetyltransferase 35, NatC auxiliary subunit (724 aa).

It belongs to the MAK10 family. Component of the N-terminal acetyltransferase C (NatC) complex.

The protein localises to the cytoplasm. Functionally, auxillary component of the N-terminal acetyltransferase C (NatC) complex which catalyzes acetylation of N-terminal methionine residues. N-terminal acetylation protects proteins from ubiquitination and degradation by the N-end rule pathway. Regulates cell proliferation during embryonic development. This chain is N-alpha-acetyltransferase 35, NatC auxiliary subunit (naa35), found in Danio rerio (Zebrafish).